A 777-amino-acid polypeptide reads, in one-letter code: Reticulon-1 (777 aa).

Disordered regions lie at residues 1–77 (MAAP…ETAS), 129–182 (NGHI…ILAD), 198–245 (TRPQ…PVEG), and 293–573 (ATHE…IPGP). Residues Ser13 and Ser68 each carry the phosphoserine modification. Basic and acidic residues predominate over residues 199–233 (RPQEAKGQEEQSPGLEDKDLDFKDKDSEVSTKPEG). 3 positions are modified to phosphoserine: Ser210, Ser241, and Ser325. Residues 326–339 (PGSVTPPSSGTEPS) are compositionally biased toward low complexity. A phosphoserine mark is found at Ser348 and Ser350. A compositionally biased stretch (polar residues) spans 393–406 (IPSSLDQEASSAES). Phosphoserine is present on Ser485. The segment covering 495–510 (AIREETSSRATEERAP) has biased composition (basic and acidic residues). A compositionally biased stretch (polar residues) spans 525–534 (TPVTLQSRPE). In terms of domain architecture, Reticulon spans 590-777 (AIDLLYWRDI…KIPGAKRHAE (188 aa)). Helical transmembrane passes span 604–624 (IVFG…VVSV) and 706–726 (FAVL…LTLL).

Interacts with NDRG1. Interacts with BACE1. Interacts with TMEM33. As to quaternary structure, interacts with UGCG; regulates the ceramide glucosyltransferase activity of UGCG. Expressed predominantly in central and peripheral nervous system of newborn and adult rats. Low levels have been also detected in heart, adrenal gland and spleen. Expression of isoform RTN1-B is restricted to particular neuronal types.

The protein resides in the endoplasmic reticulum membrane. It localises to the golgi apparatus membrane. In terms of biological role, inhibits amyloid precursor protein processing, probably by blocking BACE1 activity. In Rattus norvegicus (Rat), this protein is Reticulon-1 (Rtn1).